The following is a 370-amino-acid chain: tRNA pseudouridine(27/28) synthase (370 aa).

The active-site Nucleophile is the aspartate 56. Tyrosine 111 lines the substrate pocket.

It belongs to the tRNA pseudouridine synthase TruA family.

It is found in the mitochondrion. The catalysed reaction is uridine(27/28) in mitochondrial tRNA = pseudouridine(27/28) in mitochondrial tRNA. In terms of biological role, mitochondrial-specific pseudouridine synthase catalyzing the formation of pseudouridine at positions 27 and 28 in the anticodon stem and loop of mitochondrial transfer RNAs. This is tRNA pseudouridine(27/28) synthase (PUS2) from Saccharomyces cerevisiae (strain ATCC 204508 / S288c) (Baker's yeast).